Reading from the N-terminus, the 148-residue chain is Putative antiporter subunit mnhG2 (148 aa).

Helical transmembrane passes span 11-31, 51-71, and 72-92; these read IAAIMIFLGSIIALISSIGLI, VLLTLVGVIIFFISSQGYLSV, and RLILALVFINLTSPVGGHLIS. The segment at 125 to 148 is disordered; the sequence is EQLKQRAHEREERRRKTYEKEHDY. The segment covering 127–148 has biased composition (basic and acidic residues); sequence LKQRAHEREERRRKTYEKEHDY.

Belongs to the CPA3 antiporters (TC 2.A.63) subunit G family. As to quaternary structure, may form a heterooligomeric complex that consists of seven subunits: mnhA2, mnhB2, mnhC2, mnhD2, mnhE2, mnhF2 and mnhG2.

Its subcellular location is the cell membrane. In Staphylococcus saprophyticus subsp. saprophyticus (strain ATCC 15305 / DSM 20229 / NCIMB 8711 / NCTC 7292 / S-41), this protein is Putative antiporter subunit mnhG2 (mnhG2).